The primary structure comprises 105 residues: Large ribosomal subunit protein uL24 (105 aa).

The protein belongs to the universal ribosomal protein uL24 family. Part of the 50S ribosomal subunit.

Functionally, one of two assembly initiator proteins, it binds directly to the 5'-end of the 23S rRNA, where it nucleates assembly of the 50S subunit. One of the proteins that surrounds the polypeptide exit tunnel on the outside of the subunit. The sequence is that of Large ribosomal subunit protein uL24 from Anaplasma marginale (strain St. Maries).